The chain runs to 2710 residues: Serine/threonine-protein kinase ATR (2710 aa).

The 611-residue stretch at 1647–2257 folds into the FAT domain; sequence TLAKASFRCQ…LWMMAAVSKS (611 aa). Positions 2368–2680 constitute a PI3K/PI4K catalytic domain; sequence IADDAEILNS…GVNAAPSLPL (313 aa). The interval 2374–2380 is G-loop; that stretch reads ILNSLQK. The interval 2545 to 2553 is catalytic loop; the sequence is GLGDRHGEN. The segment at 2565 to 2589 is activation loop; the sequence is HVDFSCLFDKGLLLEKPEVVPFRFT. Residues 2678–2710 form the FATC domain; the sequence is LPLSVEGQARRLIAEAVSHSNLGKMYVWWMAWF.

The protein belongs to the PI3/PI4-kinase family. ATM subfamily.

Its subcellular location is the nucleus. The catalysed reaction is L-seryl-[protein] + ATP = O-phospho-L-seryl-[protein] + ADP + H(+). It carries out the reaction L-threonyl-[protein] + ATP = O-phospho-L-threonyl-[protein] + ADP + H(+). Its function is as follows. Probable serine/threonine kinase. Seems to play a central role in cell-cycle regulation by transmitting DNA damage signals to downstream effectors of cell-cycle progression. May recognize the substrate consensus sequence [ST]-Q and phosphorylate histone variant H2AX to form H2AXS139ph at sites of DNA damage, thereby regulating DNA damage response mechanism. The sequence is that of Serine/threonine-protein kinase ATR from Oryza sativa subsp. indica (Rice).